Here is a 752-residue protein sequence, read N- to C-terminus: MRVDAIAKVTGRARYTDDYVMAGMCYAKYVRSPIAHGYAVSINDEQARSLPGVLAIFTWEDVPDIPFATAGHAWTLDENKRDTADRALLTRHVRHHGDAVAIVVARDELTAEKAAQLVSIEWEELPVITTPEAALAEDAAPIHNGGNLLKQSTMSTGNVQQTIDAADYQVQGHYQTPVIQHCHMESVTSLAWMEDDSRITIVSSTQIPHIVRRVVGQALDIPWSCVRVIKTFVGGGFGNKQDVLEEPMAAFLTSKLGGIPVKVSLSREECFLATRTRHAFTIDGQMGVNRDGTLKGYSLDVLSNTGAYVSHGHSIASAGGNKVAYLYPRCAYAYSSKTCYTNLPSAGAMRGYGAPQVVFAVESMLDDAATALGIDPVEIRLRNASREGDANPLTGKRIYSAGLPECLEKGRKIFEWEKRRAECQNQQGNLRRGVGVACFSYTSNTWPVGVEIAGARLLMNQDGTINVQSGATEIGQGADTVFSQMVAETVGVPVSDVRVISTQDTDVTPFDPGAFASRQSYVAAPALRSAALLLKEKIIAHAAVMLHQSAMNLTLIKGHIVLVERPEEPLMSLKDLAMDAFYHPERGGQLSAESSIKTTTNPPAFGCTFVDLTVDIALCKVTINRILNVHDSGHILNPLLAEGQVHGGMGMGIGWALFEEMIIDAKSGVVRNPNLLDYKMPTMPDLPQLESAFVEINEPQSAYGHKSLGEPPIIPVAAAIRNAVKMATGVAINTLPLTPKRLYEEFHLAGLI.

Positions 206, 237, 350, and 516 each coordinate Mo-molybdopterin.

Belongs to the xanthine dehydrogenase family. In terms of assembly, heterotrimer of XdhA, XdhB and XdhC. Requires Mo-molybdopterin as cofactor.

It carries out the reaction xanthine + NAD(+) + H2O = urate + NADH + H(+). The enzyme catalyses hypoxanthine + NAD(+) + H2O = xanthine + NADH + H(+). Its pathway is purine metabolism; hypoxanthine degradation; urate from hypoxanthine: step 1/2. The protein operates within purine metabolism; hypoxanthine degradation; urate from hypoxanthine: step 2/2. Presumed to be a dehydrogenase, but possibly an oxidase. Participates in limited purine salvage (requires aspartate) but does not support aerobic growth on purines as the sole carbon source (purine catabolism). This chain is Xanthine dehydrogenase molybdenum-binding subunit (xdhA), found in Escherichia coli O157:H7.